An 856-amino-acid polypeptide reads, in one-letter code: Genome polyprotein (856 aa).

One can recognise a Peptidase S30 domain in the interval Lys-141 to Phe-284. Residues His-192, Asp-201, and Ser-235 each act as for P1 proteinase activity in the active site. An Involved in interaction with stylet and aphid transmission motif is present at residues Lys-334–Cys-337. The short motif at Pro-592–Lys-594 is the Involved in virions binding and aphid transmission element. The Peptidase C6 domain maps to Leu-618–Gly-740. Residues Cys-626 and His-699 each act as for helper component proteinase activity in the active site.

Belongs to the potyviridae genome polyprotein family. Genome polyprotein of potyviruses undergoes post-translational proteolytic processing by the main proteinase NIa-pro resulting in the production of at least ten individual proteins. The P1 proteinase and the HC-pro cleave only their respective C-termini autocatalytically. 6K1 is essential for proper proteolytic separation of P3 from CI.

It catalyses the reaction Hydrolyzes a Gly-|-Gly bond at its own C-terminus, commonly in the sequence -Tyr-Xaa-Val-Gly-|-Gly, in the processing of the potyviral polyprotein.. In terms of biological role, required for aphid transmission and also has proteolytic activity. Only cleaves a Gly-Gly dipeptide at its own C-terminus. Interacts with virions and aphid stylets. Acts as a suppressor of RNA-mediated gene silencing, also known as post-transcriptional gene silencing (PTGS), a mechanism of plant viral defense that limits the accumulation of viral RNAs. May have RNA-binding activity. The chain is Genome polyprotein from Potato virus Y (strain O) (PVY).